Reading from the N-terminus, the 238-residue chain is Sugar fermentation stimulation protein homolog (238 aa).

The protein belongs to the SfsA family.

This chain is Sugar fermentation stimulation protein homolog, found in Brucella melitensis biotype 1 (strain ATCC 23456 / CCUG 17765 / NCTC 10094 / 16M).